The following is a 104-amino-acid chain: uncharacterized protein (104 aa).

A run of 2 helical transmembrane segments spans residues 26–46 (IGTG…FTFF) and 70–90 (GLLG…IIAI).

The protein resides in the membrane. This is an uncharacterized protein from Acanthamoeba polyphaga mimivirus (APMV).